The primary structure comprises 259 residues: MWLQILSLVLSVGRIDAAPPGQSRIVGGYKCEKNSQPWQVAVINEYLCGGVLIDPSWVITAAHCYSNNYQVLLGRNNLFKDEPFAQRRLVRQSFRHPDYIPLIVTNDTEQPVHDHSNDLMLLHLSEPADITGGVKVIDLPTKEPKVGSTCLASGWGSTNPSEMVVSHDLQCVNIHLLSNEKCIETYKDNVTDVMLCAGEMEGGKDTCAGDSGGPLICDGVLQGITSGGATPCAKPKTPAIYAKLIKFTSWIKKVMKENP.

The signal sequence occupies residues 1–18 (MWLQILSLVLSVGRIDAA). The propeptide at 19-24 (PPGQSR) is activation peptide. The 232-residue stretch at 25–256 (IVGGYKCEKN…FTSWIKKVMK (232 aa)) folds into the Peptidase S1 domain. Disulfide bonds link Cys31–Cys171, Cys48–Cys64, Cys150–Cys217, Cys182–Cys196, and Cys207–Cys232. Catalysis depends on His63, which acts as the Charge relay system. His63 contributes to the Zn(2+) binding site. Asn106 is a glycosylation site (N-linked (GlcNAc...) asparagine). Residues His113 and His115 each coordinate Zn(2+). Asp118 serves as the catalytic Charge relay system. N-linked (GlcNAc...) asparagine glycosylation occurs at Asn189. The active-site Charge relay system is the Ser211.

This sequence belongs to the peptidase S1 family. Kallikrein subfamily. In terms of assembly, monomer. The cofactor is Zn(2+). Found in submaxillary gland.

It carries out the reaction Preferential cleavage of Arg-|-Xaa bonds in small molecule substrates. Highly selective action to release kallidin (lysyl-bradykinin) from kininogen involves hydrolysis of Met-|-Xaa or Leu-|-Xaa.. Its function is as follows. This protein has both trypsin- and chymotrypsin-like activities, being able to release angiotensin II from angiotensin I or angiotensinogen. In Rattus norvegicus (Rat), this protein is Tonin (Klk2).